The following is a 143-amino-acid chain: Transcriptional regulator SlyA (143 aa).

The HTH marR-type domain maps to 2-135; sequence ESTLGSDLSR…LTNLVERLEQ (134 aa). The H-T-H motif DNA-binding region spans 49–72; the sequence is QIQLAKAIGIEQPSLVRTLDQLED.

Belongs to the SlyA family. As to quaternary structure, homodimer.

Functionally, transcription regulator that can specifically activate or repress expression of target genes. This Edwardsiella tarda protein is Transcriptional regulator SlyA.